The following is a 300-amino-acid chain: Apolipoprotein E (300 aa).

The signal sequence occupies residues 1–18; that stretch reads MKVLWAVLVVTLLAGCQA. Residues 74-246 are 8 X 22 AA approximate tandem repeats; that stretch reads VLMEDTMKEV…RLDEVREQME (173 aa). 8 tandem repeats follow at residues 75-95, 96-117, 118-139, 140-161, 162-183, 184-205, 206-224, and 225-243. A Methionine sulfoxide modification is found at Met-137. Ser-141 is modified (phosphoserine). The segment at 152-162 is LDL and other lipoprotein receptors binding; it reads HLRKLRKRLLR. A heparin-binding site is contributed by 156–159; the sequence is LRKR. Residues 204 to 274 form a lipid-binding and lipoprotein association region; that stretch reads TAALTSQPLQ…GWFEPMMEDI (71 aa). 220–227 lines the heparin pocket; the sequence is GERLRGRL. Residues 262–274 are specificity for association with VLDL; that stretch reads RLKGWFEPMMEDI.

The protein belongs to the apolipoprotein A1/A4/E family. As to quaternary structure, homotetramer. May interact with ABCA1; functionally associated with ABCA1 in the biogenesis of HDLs. May interact with APP/A4 amyloid-beta peptide; the interaction is extremely stable in vitro but its physiological significance is unclear. May interact with MAPT. May interact with MAP2. In the cerebrospinal fluid, interacts with secreted SORL1. Interacts with PMEL; this allows the loading of PMEL luminal fragment on ILVs to induce fibril nucleation. Post-translationally, APOE exists as multiple glycosylated and sialylated glycoforms within cells and in plasma. The extent of glycosylation and sialylation are tissue and context specific. Glycated in plasma VLDL. In terms of processing, phosphorylated by FAM20C in the extracellular medium.

The protein localises to the secreted. The protein resides in the extracellular space. It is found in the extracellular matrix. Its subcellular location is the extracellular vesicle. It localises to the endosome. The protein localises to the multivesicular body. Its function is as follows. APOE is an apolipoprotein, a protein associating with lipid particles, that mainly functions in lipoprotein-mediated lipid transport between organs via the plasma and interstitial fluids. APOE is a core component of plasma lipoproteins and is involved in their production, conversion and clearance. Apolipoproteins are amphipathic molecules that interact both with lipids of the lipoprotein particle core and the aqueous environment of the plasma. As such, APOE associates with chylomicrons, chylomicron remnants, very low density lipoproteins (VLDL) and intermediate density lipoproteins (IDL) but shows a preferential binding to high-density lipoproteins (HDL). It also binds a wide range of cellular receptors including the LDL receptor/LDLR, the LDL receptor-related proteins LRP1, LRP2 and LRP8 and the very low-density lipoprotein receptor/VLDLR that mediate the cellular uptake of the APOE-containing lipoprotein particles. Finally, APOE also has a heparin-binding activity and binds heparan-sulfate proteoglycans on the surface of cells, a property that supports the capture and the receptor-mediated uptake of APOE-containing lipoproteins by cells. A main function of APOE is to mediate lipoprotein clearance through the uptake of chylomicrons, VLDLs, and HDLs by hepatocytes. APOE is also involved in the biosynthesis by the liver of VLDLs as well as their uptake by peripheral tissues ensuring the delivery of triglycerides and energy storage in muscle, heart and adipose tissues. By participating in the lipoprotein-mediated distribution of lipids among tissues, APOE plays a critical role in plasma and tissues lipid homeostasis. APOE is also involved in two steps of reverse cholesterol transport, the HDLs-mediated transport of cholesterol from peripheral tissues to the liver, and thereby plays an important role in cholesterol homeostasis. First, it is functionally associated with ABCA1 in the biogenesis of HDLs in tissues. Second, it is enriched in circulating HDLs and mediates their uptake by hepatocytes. APOE also plays an important role in lipid transport in the central nervous system, regulating neuron survival and sprouting. The protein is Apolipoprotein E (APOE) of Dinomys branickii (Pacarana).